We begin with the raw amino-acid sequence, 105 residues long: Thioredoxin (105 aa).

The Thioredoxin domain occupies methionine 1 to isoleucine 105. An intrachain disulfide couples cysteine 29 to cysteine 32.

The protein belongs to the thioredoxin family.

Its function is as follows. Participates in various redox reactions through the reversible oxidation of its active center dithiol to a disulfide and catalyzes dithiol-disulfide exchange reactions. The chain is Thioredoxin (trxA) from Acetoanaerobium sticklandii (strain ATCC 12662 / DSM 519 / JCM 1433 / CCUG 9281 / NCIMB 10654 / HF) (Clostridium sticklandii).